The primary structure comprises 911 residues: DNA mismatch repair protein MutS (911 aa).

The interval 1–95 is disordered; the sequence is MALQGNLFGD…PWSHHSQVTP (95 aa). Positions 23–42 are enriched in basic and acidic residues; the sequence is KRQDEPDQLDDHELTQDAKQ. 727 to 734 contacts ATP; sequence GPNASGKS.

Belongs to the DNA mismatch repair MutS family.

In terms of biological role, this protein is involved in the repair of mismatches in DNA. It is possible that it carries out the mismatch recognition step. This protein has a weak ATPase activity. The sequence is that of DNA mismatch repair protein MutS from Synechococcus sp. (strain CC9311).